A 115-amino-acid polypeptide reads, in one-letter code: Dolichyl-diphosphooligosaccharide--protein glycosyltransferase subunit DAD1 (115 aa).

Residues 1 to 31 (MVKSTSKDAQDLFRSLRSAYSATPTNLKIID) lie on the Cytoplasmic side of the membrane. Residues 32–52 (LYVVFAVFTALIQVVYMALVG) form a helical membrane-spanning segment. At 53-55 (SFP) the chain is on the lumenal side. The helical transmembrane segment at 56 to 76 (FNSFLSGVLSCIGTAVLAVCL) threads the bilayer. The Cytoplasmic segment spans residues 77-94 (RIQVNKENKEFKDLAPER). The chain crosses the membrane as a helical span at residues 95–115 (AFADFVLCNLVLHLVIINFLG).

Belongs to the DAD/OST2 family. Component of the oligosaccharyltransferase (OST) complex. Ubiquitous.

It is found in the endoplasmic reticulum membrane. The protein operates within protein modification; protein glycosylation. In terms of biological role, subunit of the oligosaccharyl transferase (OST) complex that catalyzes the initial transfer of a defined glycan (Glc(3)Man(9)GlcNAc(2) in eukaryotes) from the lipid carrier dolichol-pyrophosphate to an asparagine residue within an Asn-X-Ser/Thr consensus motif in nascent polypeptide chains, the first step in protein N-glycosylation. N-glycosylation occurs cotranslationally and the complex associates with the Sec61 complex at the channel-forming translocon complex that mediates protein translocation across the endoplasmic reticulum (ER). All subunits are required for a maximal enzyme activity. The polypeptide is Dolichyl-diphosphooligosaccharide--protein glycosyltransferase subunit DAD1 (DAD1) (Arabidopsis thaliana (Mouse-ear cress)).